A 361-amino-acid chain; its full sequence is Protein YIM1-2 (361 aa).

This sequence belongs to the YIM1 family.

The protein resides in the lipid droplet. It localises to the mitochondrion. This is Protein YIM1-2 (YIM1-2) from Lachancea thermotolerans (strain ATCC 56472 / CBS 6340 / NRRL Y-8284) (Yeast).